The sequence spans 160 residues: UPF0262 protein ELI_10965 (160 aa).

This sequence belongs to the UPF0262 family.

In Erythrobacter litoralis (strain HTCC2594), this protein is UPF0262 protein ELI_10965.